A 94-amino-acid chain; its full sequence is Co-chaperonin GroES (94 aa).

It belongs to the GroES chaperonin family. As to quaternary structure, heptamer of 7 subunits arranged in a ring. Interacts with the chaperonin GroEL.

The protein resides in the cytoplasm. Together with the chaperonin GroEL, plays an essential role in assisting protein folding. The GroEL-GroES system forms a nano-cage that allows encapsulation of the non-native substrate proteins and provides a physical environment optimized to promote and accelerate protein folding. GroES binds to the apical surface of the GroEL ring, thereby capping the opening of the GroEL channel. The chain is Co-chaperonin GroES from Brevibacillus brevis (strain 47 / JCM 6285 / NBRC 100599).